Consider the following 78-residue polypeptide: Large ribosomal subunit protein bL28 (78 aa).

The protein belongs to the bacterial ribosomal protein bL28 family.

The chain is Large ribosomal subunit protein bL28 from Shigella boydii serotype 4 (strain Sb227).